A 562-amino-acid chain; its full sequence is Extracellular matrix protein 1 (562 aa).

The signal sequence occupies residues 1-19 (MGTIRSSALILACLALASA). 2 disordered regions span residues 46–87 (GYAA…SSPE) and 119–171 (QKEQ…WNPA). Residues 129–154 (IEQKEIDPPVQHQEEIVQSRQKEEKP) show a composition bias toward basic and acidic residues. Repeat copies occupy residues 172–301 (RHCQ…RPDY) and 305–427 (PCPI…YPNY). A 2 X approximate repeats region spans residues 172-427 (RHCQQGRRGI…FAHLAPYPNY (256 aa)). N-linked (GlcNAc...) asparagine glycans are attached at residues N376, N466, and N538. The disordered stretch occupies residues 539–562 (ATGLGQQGPTGGTNVGPAPGSKEE). Gly residues predominate over residues 543 to 552 (GQQGPTGGTN). At S559 the chain carries Phosphoserine.

Interacts (via C-terminus) with HSPG2 (via C-terminus). Interacts with EFEMP1/FBLN3 and LAMB3. Interacts with MMP9.

The protein resides in the secreted. Its subcellular location is the extracellular space. It is found in the extracellular matrix. In terms of biological role, involved in endochondral bone formation as negative regulator of bone mineralization. Stimulates the proliferation of endothelial cells and promotes angiogenesis. Inhibits MMP9 proteolytic activity. This Rattus norvegicus (Rat) protein is Extracellular matrix protein 1 (Ecm1).